We begin with the raw amino-acid sequence, 60 residues long: Large ribosomal subunit protein bL32 (60 aa).

This sequence belongs to the bacterial ribosomal protein bL32 family.

The polypeptide is Large ribosomal subunit protein bL32 (Borreliella afzelii (strain PKo) (Borrelia afzelii)).